The chain runs to 618 residues: Chaperone protein HscA homolog (618 aa).

Belongs to the heat shock protein 70 family.

Chaperone involved in the maturation of iron-sulfur cluster-containing proteins. Has a low intrinsic ATPase activity which is markedly stimulated by HscB. The polypeptide is Chaperone protein HscA homolog (Methylibium petroleiphilum (strain ATCC BAA-1232 / LMG 22953 / PM1)).